The primary structure comprises 2193 residues: Genome polyprotein (2193 aa).

Gly-2 carries N-myristoyl glycine; by host lipidation. Residues 2–1503 (GAQVSTQKTG…HVSRAFICLQ (1502 aa)) are Cytoplasmic-facing. The tract at residues 567–583 (ELQSDVREAVEGAIGRV) is amphipathic alpha-helix. Residues His-880 and Asp-898 each act as for protease 2A activity in the active site. 2 residues coordinate Zn(2+): Cys-915 and Cys-917. Cys-969 functions as the For protease 2A activity in the catalytic mechanism. Residues Cys-975 and His-977 each contribute to the Zn(2+) site. Residues 1109-1181 (NNRWLKKFTE…EQSAPSQGDQ (73 aa)) form a membrane-binding region. The interval 1109-1247 (NNRWLKKFTE…SPGAGKSVAT (139 aa)) is oligomerization. An RNA-binding region spans residues 1130–1134 (AIKIQ). Positions 1213 to 1369 (EKKMSNYIQF…SMYSQNGKIN (157 aa)) constitute an SF3 helicase domain. Residues Cys-1377, Cys-1389, and Cys-1394 each contribute to the Zn(2+) site. Residues 1377–1394 (CDEECCPVNFKKCCPLVC) form a C4-type; degenerate zinc finger. Residues 1421 to 1428 (EYNHRHSV) are RNA-binding. An oligomerization region spans residues 1432 to 1437 (LEALFQ). The stretch at 1504–1519 (ALTTFVSVAGIIYIIY) is an intramembrane region. The Cytoplasmic portion of the chain corresponds to 1520–2193 (KLFAGFQGAY…TLRRKWLDSF (674 aa)). Tyr-1529 carries the O-(5'-phospho-RNA)-tyrosine modification. The Peptidase C3 domain maps to 1549-1727 (GPAFEFAVAM…FSAALLKHYF (179 aa)). Catalysis depends on for protease 3C activity residues His-1588, Glu-1619, and Cys-1695. The RdRp catalytic domain maps to 1958–2074 (GHLIAFDYSG…SYPWPIDASL (117 aa)). Residues Asp-1964 and Asp-2060 each contribute to the Mg(2+) site.

It belongs to the picornaviruses polyprotein family. Interacts with capsid protein VP1 and capsid protein VP3 to form heterotrimeric protomers. In terms of assembly, interacts with capsid protein VP0, and capsid protein VP3 to form heterotrimeric protomers. Five protomers subsequently associate to form pentamers which serve as building blocks for the capsid. Interacts with capsid protein VP2, capsid protein VP3 and capsid protein VP4 following cleavage of capsid protein VP0. As to quaternary structure, interacts with capsid protein VP1 and capsid protein VP3 in the mature capsid. Interacts with capsid protein VP0 and capsid protein VP1 to form heterotrimeric protomers. Five protomers subsequently associate to form pentamers which serve as building blocks for the capsid. Interacts with capsid protein VP4 in the mature capsid. Interacts with protein 2C; this interaction may be important for virion morphogenesis. In terms of assembly, interacts with capsid protein VP1 and capsid protein VP3. As to quaternary structure, homodimer. Homohexamer; forms a hexameric ring structure with 6-fold symmetry characteristic of AAA+ ATPases. Interacts (via N-terminus) with host RTN3 (via reticulon domain); this interaction is important for viral replication. Interacts with capsid protein VP3; this interaction may be important for virion morphogenesis. In terms of assembly, interacts with protein 3CD. As to quaternary structure, homodimer. Interacts with host GBF1. Interacts (via GOLD domain) with host ACBD3 (via GOLD domain); this interaction allows the formation of a viral protein 3A/ACBD3 heterotetramer with a 2:2 stoichiometry, which will stimulate the recruitment of host PI4KB in order to synthesize PI4P at the viral RNA replication sites. Interacts with RNA-directed RNA polymerase. In terms of assembly, interacts with protein 3AB and with RNA-directed RNA polymerase. As to quaternary structure, interacts with Viral protein genome-linked and with protein 3CD. The cofactor is Mg(2+). Post-translationally, specific enzymatic cleavages in vivo by the viral proteases yield processing intermediates and the mature proteins. In terms of processing, myristoylation is required for the formation of pentamers during virus assembly. Further assembly of 12 pentamers and a molecule of genomic RNA generates the provirion. During virion maturation, immature virions are rendered infectious following cleavage of VP0 into VP4 and VP2. This maturation seems to be an autocatalytic event triggered by the presence of RNA in the capsid and it is followed by a conformational change infectious virion. Post-translationally, myristoylation is required during RNA encapsidation and formation of the mature virus particle. In terms of processing, VPg is uridylylated by the polymerase into VPg-pUpU. This acts as a nucleotide-peptide primer for the genomic RNA replication.

Its subcellular location is the virion. The protein resides in the host cytoplasm. It is found in the host cytoplasmic vesicle membrane. The protein localises to the host nucleus. The catalysed reaction is a ribonucleoside 5'-triphosphate + H2O = a ribonucleoside 5'-diphosphate + phosphate + H(+). It catalyses the reaction Selective cleavage of Tyr-|-Gly bond in the picornavirus polyprotein.. The enzyme catalyses RNA(n) + a ribonucleoside 5'-triphosphate = RNA(n+1) + diphosphate. It carries out the reaction Selective cleavage of Gln-|-Gly bond in the poliovirus polyprotein. In other picornavirus reactions Glu may be substituted for Gln, and Ser or Thr for Gly.. With respect to regulation, replication or transcription is subject to high level of random mutations by the nucleotide analog ribavirin. Functionally, forms an icosahedral capsid of pseudo T=3 symmetry with capsid proteins VP2 and VP3. The capsid is 300 Angstroms in diameter, composed of 60 copies of each capsid protein and enclosing the viral positive strand RNA genome. Capsid protein VP1 mainly forms the vertices of the capsid. Capsid protein VP1 interacts with host cell receptor to provide virion attachment to target host cells. This attachment induces virion internalization. Tyrosine kinases are probably involved in the entry process. After binding to its receptor, the capsid undergoes conformational changes. Capsid protein VP1 N-terminus (that contains an amphipathic alpha-helix) and capsid protein VP4 are externalized. Together, they shape a pore in the host membrane through which viral genome is translocated to host cell cytoplasm. In terms of biological role, forms an icosahedral capsid of pseudo T=3 symmetry with capsid proteins VP2 and VP3. The capsid is 300 Angstroms in diameter, composed of 60 copies of each capsid protein and enclosing the viral positive strand RNA genome. Lies on the inner surface of the capsid shell. After binding to the host receptor, the capsid undergoes conformational changes. Capsid protein VP4 is released, Capsid protein VP1 N-terminus is externalized, and together, they shape a pore in the host membrane through which the viral genome is translocated into the host cell cytoplasm. Its function is as follows. Component of immature procapsids, which is cleaved into capsid proteins VP4 and VP2 after maturation. Allows the capsid to remain inactive before the maturation step. Functionally, cysteine protease that cleaves viral polyprotein and specific host proteins. It is responsible for the autocatalytic cleavage between the P1 and P2 regions, which is the first cleavage occurring in the polyprotein. Also cleaves the host translation initiation factor EIF4G1, in order to shut down the capped cellular mRNA translation. Inhibits the host nucleus-cytoplasm protein and RNA trafficking by cleaving host members of the nuclear pores. Counteracts stress granule formation probably by antagonizing its assembly or promoting its dissassembly. In terms of biological role, plays an essential role in the virus replication cycle by acting as a viroporin. Creates a pore in the host endoplasmic reticulum and as a consequence releases Ca2+ in the cytoplasm of infected cell. In turn, high levels of cytoplasmic calcium may trigger membrane trafficking and transport of viral ER-associated proteins to viroplasms, sites of viral genome replication. Induces and associates with structural rearrangements of intracellular membranes. Displays RNA-binding, nucleotide binding and NTPase activities. May play a role in virion morphogenesis and viral RNA encapsidation by interacting with the capsid protein VP3. Its function is as follows. Localizes the viral replication complex to the surface of membranous vesicles. Together with protein 3CD binds the Cis-Active RNA Element (CRE) which is involved in RNA synthesis initiation. Acts as a cofactor to stimulate the activity of 3D polymerase, maybe through a nucleid acid chaperone activity. Functionally, localizes the viral replication complex to the surface of membranous vesicles. It inhibits host cell endoplasmic reticulum-to-Golgi apparatus transport and causes the disassembly of the Golgi complex, possibly through GBF1 interaction. This would result in depletion of MHC, trail receptors and IFN receptors at the host cell surface. Plays an essential role in viral RNA replication by recruiting ACBD3 and PI4KB at the viral replication sites, thereby allowing the formation of the rearranged membranous structures where viral replication takes place. In terms of biological role, acts as a primer for viral RNA replication and remains covalently bound to viral genomic RNA. VPg is uridylylated prior to priming replication into VPg-pUpU. The oriI viral genomic sequence may act as a template for this. The VPg-pUpU is then used as primer on the genomic RNA poly(A) by the RNA-dependent RNA polymerase to replicate the viral genome. During genome replication, the VPg-RNA linkage is removed by the host TDP2, thereby accelerating replication. During the late stage of the replication cycle, host TDP2 is excluded from sites of viral RNA synthesis and encapsidation, allowing for the generation of progeny virions. Involved in the viral replication complex and viral polypeptide maturation. It exhibits protease activity with a specificity and catalytic efficiency that is different from protease 3C. Protein 3CD lacks polymerase activity. Protein 3CD binds to the 5'UTR of the viral genome. Its function is as follows. Replicates the viral genomic RNA on the surface of intracellular membranes. May form linear arrays of subunits that propagate along a strong head-to-tail interaction called interface-I. Covalently attaches UMP to a tyrosine of VPg, which is used to prime RNA synthesis. The positive stranded RNA genome is first replicated at virus induced membranous vesicles, creating a dsRNA genomic replication form. This dsRNA is then used as template to synthesize positive stranded RNA genomes. ss(+)RNA genomes are either translated, replicated or encapsidated. Functionally, major viral protease that mediates proteolytic processing of the polyprotein. Cleaves host EIF5B, contributing to host translation shutoff. Also cleaves host PABPC1, contributing to host translation shutoff. Cleaves host NLRP1, triggers host N-glycine-mediated degradation of the autoinhibitory NLRP1 N-terminal fragment. The sequence is that of Genome polyprotein from Echovirus 9 (strain Hill).